A 298-amino-acid chain; its full sequence is Protease HtpX homolog (298 aa).

Helical transmembrane passes span 14–34 (VVLL…AGYL) and 39–59 (YAMG…SMIF). Histidine 143 serves as a coordination point for Zn(2+). Glutamate 144 is a catalytic residue. Histidine 147 is a Zn(2+) binding site. Transmembrane regions (helical) follow at residues 158–178 (IAVA…RMLW) and 197–217 (IITL…ASLI). Glutamate 226 contributes to the Zn(2+) binding site.

This sequence belongs to the peptidase M48B family. Zn(2+) is required as a cofactor.

The protein localises to the cell membrane. This Streptococcus pyogenes serotype M6 (strain ATCC BAA-946 / MGAS10394) protein is Protease HtpX homolog.